Consider the following 706-residue polypeptide: Ribosomal RNA large subunit methyltransferase K/L (706 aa).

Residues L43–L154 form the THUMP domain.

Belongs to the methyltransferase superfamily. RlmKL family.

It is found in the cytoplasm. The enzyme catalyses guanosine(2445) in 23S rRNA + S-adenosyl-L-methionine = N(2)-methylguanosine(2445) in 23S rRNA + S-adenosyl-L-homocysteine + H(+). It carries out the reaction guanosine(2069) in 23S rRNA + S-adenosyl-L-methionine = N(2)-methylguanosine(2069) in 23S rRNA + S-adenosyl-L-homocysteine + H(+). Specifically methylates the guanine in position 2445 (m2G2445) and the guanine in position 2069 (m7G2069) of 23S rRNA. In Yersinia pseudotuberculosis serotype IB (strain PB1/+), this protein is Ribosomal RNA large subunit methyltransferase K/L.